The chain runs to 416 residues: Exodeoxyribonuclease 7 large subunit (416 aa).

This sequence belongs to the XseA family. As to quaternary structure, heterooligomer composed of large and small subunits.

Its subcellular location is the cytoplasm. The catalysed reaction is Exonucleolytic cleavage in either 5'- to 3'- or 3'- to 5'-direction to yield nucleoside 5'-phosphates.. Bidirectionally degrades single-stranded DNA into large acid-insoluble oligonucleotides, which are then degraded further into small acid-soluble oligonucleotides. The chain is Exodeoxyribonuclease 7 large subunit from Nitratiruptor sp. (strain SB155-2).